Reading from the N-terminus, the 109-residue chain is Flagellar hook-basal body complex protein FliE (109 aa).

The protein belongs to the FliE family.

Its subcellular location is the bacterial flagellum basal body. This Pseudomonas aeruginosa (strain LESB58) protein is Flagellar hook-basal body complex protein FliE.